Consider the following 463-residue polypeptide: L-seryl-tRNA(Sec) selenium transferase (463 aa).

The residue at position 295 (Lys295) is an N6-(pyridoxal phosphate)lysine.

Belongs to the SelA family. Homodecamer; pentamer of dimers. Binds only one seryl-tRNA(Sec) per dimer. Requires pyridoxal 5'-phosphate as cofactor.

It is found in the cytoplasm. It carries out the reaction L-seryl-tRNA(Sec) + selenophosphate + H(+) = L-selenocysteinyl-tRNA(Sec) + phosphate. It functions in the pathway aminoacyl-tRNA biosynthesis; selenocysteinyl-tRNA(Sec) biosynthesis; selenocysteinyl-tRNA(Sec) from L-seryl-tRNA(Sec) (bacterial route): step 1/1. In terms of biological role, converts seryl-tRNA(Sec) to selenocysteinyl-tRNA(Sec) required for selenoprotein biosynthesis. The chain is L-seryl-tRNA(Sec) selenium transferase from Salmonella dublin (strain CT_02021853).